Reading from the N-terminus, the 96-residue chain is RNA-binding protein Hfq (96 aa).

A Sm domain is found at 9–68 (DPYLNALRRERIPVSIYLVNGIKLQGQIESFDQFVILLKNTVNQMVYKHAISTVVPARSV).

This sequence belongs to the Hfq family. As to quaternary structure, homohexamer.

In terms of biological role, RNA chaperone that binds small regulatory RNA (sRNAs) and mRNAs to facilitate mRNA translational regulation in response to envelope stress, environmental stress and changes in metabolite concentrations. Also binds with high specificity to tRNAs. The protein is RNA-binding protein Hfq of Histophilus somni (strain 129Pt) (Haemophilus somnus).